The primary structure comprises 151 residues: 3-dehydroquinate dehydratase 1 (151 aa).

Y23 (proton acceptor) is an active-site residue. Substrate is bound by residues N75, H81, and D88. The Proton donor role is filled by H101. Substrate is bound by residues 102 to 103 (LS) and R112.

It belongs to the type-II 3-dehydroquinase family. In terms of assembly, homododecamer.

It carries out the reaction 3-dehydroquinate = 3-dehydroshikimate + H2O. Its pathway is metabolic intermediate biosynthesis; chorismate biosynthesis; chorismate from D-erythrose 4-phosphate and phosphoenolpyruvate: step 3/7. In terms of biological role, catalyzes a trans-dehydration via an enolate intermediate. The protein is 3-dehydroquinate dehydratase 1 (aroQ1) of Pseudomonas putida (strain ATCC 47054 / DSM 6125 / CFBP 8728 / NCIMB 11950 / KT2440).